Consider the following 170-residue polypeptide: tRNA-splicing endonuclease (170 aa).

Active-site residues include Tyr110, His116, and Lys147.

The protein belongs to the tRNA-intron endonuclease family. Archaeal short subfamily. In terms of assembly, homotetramer; although the tetramer contains four active sites, only two participate in the cleavage. Therefore, it should be considered as a dimer of dimers.

The catalysed reaction is pretRNA = a 3'-half-tRNA molecule with a 5'-OH end + a 5'-half-tRNA molecule with a 2',3'-cyclic phosphate end + an intron with a 2',3'-cyclic phosphate and a 5'-hydroxyl terminus.. Endonuclease that removes tRNA introns. Cleaves pre-tRNA at the 5'- and 3'-splice sites to release the intron. The products are an intron and two tRNA half-molecules bearing 2',3' cyclic phosphate and 5'-OH termini. Recognizes a pseudosymmetric substrate in which 2 bulged loops of 3 bases are separated by a stem of 4 bp. The sequence is that of tRNA-splicing endonuclease from Pyrococcus abyssi (strain GE5 / Orsay).